Consider the following 385-residue polypeptide: Polyketide synthase 2 (385 aa).

The active site involves Cys-157.

It belongs to the thiolase-like superfamily. Chalcone/stilbene synthases family. In terms of tissue distribution, expressed in leaves and glandular trichomes.

It is found in the cytoplasm. Its function is as follows. Polyketide synthase responsible for the biosynthesis of secondary metabolites. The protein is Polyketide synthase 2 (PKSG2) of Cannabis sativa (Hemp).